We begin with the raw amino-acid sequence, 689 residues long: Armadillo-like helical domain-containing protein 3 (689 aa).

A helical membrane pass occupies residues 520 to 538; that stretch reads IFTLTLMVVNLFNMFITYG.

The protein belongs to the ARMH3 family.

It is found in the golgi apparatus membrane. It localises to the cytoplasm. Functionally, may be involved in Golgi maintenance and protein secretion. This is Armadillo-like helical domain-containing protein 3 from Xenopus laevis (African clawed frog).